The primary structure comprises 506 residues: Secreted RxLR effector protein 134 (506 aa).

Positions 1–19 (MQGAYCVAVALLIAASGQA) are cleaved as a signal peptide. The RxLR-dEER motif lies at 50 to 71 (RVLQVSHYPKDDLMLLAGNEER).

Belongs to the RxLR effector family.

The protein resides in the secreted. It localises to the host nucleus. Secreted effector that completely suppresses the host cell death induced by cell death-inducing proteins. The sequence is that of Secreted RxLR effector protein 134 from Plasmopara viticola (Downy mildew of grapevine).